The following is a 677-amino-acid chain: Mitochondrial 15S rRNA processing factor ppr3 (677 aa).

The N-terminal 43 residues, 1-43 (MFTEICGKLRTCIYKKVAFSRPLGCNLRQLPVFRDFHNSVSCL), are a transit peptide targeting the mitochondrion. PPR repeat units follow at residues 210 to 244 (SVYL…QLKP), 245 to 279 (DNYT…KIEA), 280 to 314 (NTHV…SLQS), 317 to 351 (DDKT…PINP), 355 to 390 (SSRT…QWKP), and 569 to 604 (DIHV…SYLP).

The protein belongs to the CCM1 family. As to quaternary structure, binds to mitochondrial small subunit 15S rRNA.

The protein localises to the mitochondrion. Its function is as follows. Regulates mitochondrial small subunit maturation by controlling 15S rRNA 5'-end processing. Localizes to the 5' precursor of the 15S rRNA in a position that is subsequently occupied by mS47 in the mature yeast mtSSU. Uses structure and sequence-specific RNA recognition, binding to a single-stranded region of the precursor and specifically recognizing bases -6 to -1. The exchange of Ccm1 for mS47 is coupled to the irreversible removal of precursor rRNA that is accompanied by conformational changes of the mitoribosomal proteins uS5m and mS26. These conformational changes signal completion of 5'-end rRNA processing through protection of the mature 5'-end of the 15S rRNA and stabilization of mS47. The removal of the 5' precursor together with the dissociation of Ccm1 may be catalyzed by the 5'-3' exoribonuclease Pet127. Involved in the specific removal of group I introns in mitochondrial encoded transcripts. The sequence is that of Mitochondrial 15S rRNA processing factor ppr3 (dmr1) from Schizosaccharomyces japonicus (strain yFS275 / FY16936) (Fission yeast).